Consider the following 123-residue polypeptide: Small ribosomal subunit protein bS16 (123 aa).

Positions 87–123 are disordered; it reads AKNNPIKAKPGKRAQERAAEKAQKAADAAAAAADAAE. The segment covering 99–110 has biased composition (basic and acidic residues); it reads RAQERAAEKAQK. Positions 111–123 are enriched in low complexity; the sequence is AADAAAAAADAAE.

Belongs to the bacterial ribosomal protein bS16 family.

The sequence is that of Small ribosomal subunit protein bS16 from Rhizobium etli (strain CIAT 652).